The chain runs to 198 residues: ATP-dependent Clp protease proteolytic subunit 1 (198 aa).

Ser96 functions as the Nucleophile in the catalytic mechanism. Residue His121 is part of the active site.

The protein belongs to the peptidase S14 family. Fourteen ClpP subunits assemble into 2 heptameric rings which stack back to back to give a disk-like structure with a central cavity, resembling the structure of eukaryotic proteasomes.

The protein resides in the cytoplasm. It carries out the reaction Hydrolysis of proteins to small peptides in the presence of ATP and magnesium. alpha-casein is the usual test substrate. In the absence of ATP, only oligopeptides shorter than five residues are hydrolyzed (such as succinyl-Leu-Tyr-|-NHMec, and Leu-Tyr-Leu-|-Tyr-Trp, in which cleavage of the -Tyr-|-Leu- and -Tyr-|-Trp bonds also occurs).. In terms of biological role, cleaves peptides in various proteins in a process that requires ATP hydrolysis. Has a chymotrypsin-like activity. Plays a major role in the degradation of misfolded proteins. The sequence is that of ATP-dependent Clp protease proteolytic subunit 1 from Synechocystis sp. (strain ATCC 27184 / PCC 6803 / Kazusa).